Reading from the N-terminus, the 844-residue chain is Translation elongation factor 2 (844 aa).

The 332-residue stretch at 17–348 (RNIRNMSVIA…MIAIHLPSPV (332 aa)) folds into the tr-type G domain. Residue 26–33 (AHVDHGKS) participates in GTP binding. 2 positions are modified to phosphothreonine: Thr-57 and Thr-59. GTP contacts are provided by residues 162-165 (NKMD) and 219-221 (SGL). Ser-488 is subject to Phosphoserine. The residue at position 701 (His-701) is a Diphthamide.

Belongs to the TRAFAC class translation factor GTPase superfamily. Classic translation factor GTPase family. EF-G/EF-2 subfamily. In terms of processing, phosphorylation by EF-2 kinase completely inactivates EF-2.

The protein localises to the cytoplasm. The catalysed reaction is GTP + H2O = GDP + phosphate + H(+). Functionally, catalyzes the GTP-dependent ribosomal translocation step during translation elongation. During this step, the ribosome changes from the pre-translocational (PRE) to the post-translocational (POST) state as the newly formed A-site-bound peptidyl-tRNA and P-site-bound deacylated tRNA move to the P and E sites, respectively. Catalyzes the coordinated movement of the two tRNA molecules, the mRNA and conformational changes in the ribosome. The chain is Translation elongation factor 2 from Bombyx mori (Silk moth).